The chain runs to 609 residues: Glutamine--fructose-6-phosphate aminotransferase [isomerizing] (609 aa).

The active-site Nucleophile; for GATase activity is the C2. Positions 2–218 (CGIVGAIAQR…EGDIAEITRR (217 aa)) constitute a Glutamine amidotransferase type-2 domain. SIS domains follow at residues 286–426 (ADDL…LKGL) and 458–599 (LAED…VDQP). The For Fru-6P isomerization activity role is filled by K604.

In terms of assembly, homodimer.

It localises to the cytoplasm. It carries out the reaction D-fructose 6-phosphate + L-glutamine = D-glucosamine 6-phosphate + L-glutamate. Catalyzes the first step in hexosamine metabolism, converting fructose-6P into glucosamine-6P using glutamine as a nitrogen source. This chain is Glutamine--fructose-6-phosphate aminotransferase [isomerizing], found in Salmonella typhi.